The chain runs to 190 residues: Pyridoxal 5'-phosphate synthase subunit PdxT (190 aa).

46-48 (GES) contributes to the L-glutamine binding site. Cys78 acts as the Nucleophile in catalysis. Residues Arg108 and 137–138 (IR) contribute to the L-glutamine site. Active-site charge relay system residues include His174 and Glu176.

It belongs to the glutaminase PdxT/SNO family. In terms of assembly, in the presence of PdxS, forms a dodecamer of heterodimers. Only shows activity in the heterodimer.

The enzyme catalyses aldehydo-D-ribose 5-phosphate + D-glyceraldehyde 3-phosphate + L-glutamine = pyridoxal 5'-phosphate + L-glutamate + phosphate + 3 H2O + H(+). It catalyses the reaction L-glutamine + H2O = L-glutamate + NH4(+). Its pathway is cofactor biosynthesis; pyridoxal 5'-phosphate biosynthesis. Its function is as follows. Catalyzes the hydrolysis of glutamine to glutamate and ammonia as part of the biosynthesis of pyridoxal 5'-phosphate. The resulting ammonia molecule is channeled to the active site of PdxS. This is Pyridoxal 5'-phosphate synthase subunit PdxT from Chloroflexus aggregans (strain MD-66 / DSM 9485).